The primary structure comprises 610 residues: Phosphoenolpyruvate carboxykinase [GTP] (610 aa).

Substrate is bound by residues arginine 82 and 221–223 (YGG). Residues lysine 230 and histidine 250 each coordinate Mn(2+). Serine 272 is a binding site for substrate. A GTP-binding site is contributed by 273–278 (ACGKTN). Cysteine 274 is a catalytic residue. Aspartate 297 contributes to the Mn(2+) binding site. 387–389 (NSR) lines the substrate pocket. Residues arginine 389, arginine 420, and 515–518 (FGDN) contribute to the GTP site.

The protein belongs to the phosphoenolpyruvate carboxykinase [GTP] family. As to quaternary structure, monomer. Requires Mn(2+) as cofactor.

It is found in the cytoplasm. The catalysed reaction is oxaloacetate + GTP = phosphoenolpyruvate + GDP + CO2. Its pathway is carbohydrate biosynthesis; gluconeogenesis. Catalyzes the conversion of oxaloacetate (OAA) to phosphoenolpyruvate (PEP), the rate-limiting step in the metabolic pathway that produces glucose from lactate and other precursors derived from the citric acid cycle. The sequence is that of Phosphoenolpyruvate carboxykinase [GTP] from Corynebacterium glutamicum (strain R).